The following is a 640-amino-acid chain: Threonine--tRNA ligase (640 aa).

The TGS domain maps to 1-61 (MPIITLPDGS…DHDATLQIIT (61 aa)). The segment at 242–533 (DHRKLGKRLD…LIEHYEGAFP (292 aa)) is catalytic. 3 residues coordinate Zn(2+): cysteine 333, histidine 384, and histidine 510.

This sequence belongs to the class-II aminoacyl-tRNA synthetase family. Homodimer. Zn(2+) serves as cofactor.

It localises to the cytoplasm. The enzyme catalyses tRNA(Thr) + L-threonine + ATP = L-threonyl-tRNA(Thr) + AMP + diphosphate + H(+). Catalyzes the attachment of threonine to tRNA(Thr) in a two-step reaction: L-threonine is first activated by ATP to form Thr-AMP and then transferred to the acceptor end of tRNA(Thr). Also edits incorrectly charged L-seryl-tRNA(Thr). This is Threonine--tRNA ligase from Azotobacter vinelandii (strain DJ / ATCC BAA-1303).